A 250-amino-acid polypeptide reads, in one-letter code: 5-oxoprolinase subunit A (250 aa).

The protein belongs to the LamB/PxpA family. As to quaternary structure, forms a complex composed of PxpA, PxpB and PxpC.

The enzyme catalyses 5-oxo-L-proline + ATP + 2 H2O = L-glutamate + ADP + phosphate + H(+). In terms of biological role, catalyzes the cleavage of 5-oxoproline to form L-glutamate coupled to the hydrolysis of ATP to ADP and inorganic phosphate. The chain is 5-oxoprolinase subunit A from Staphylococcus aureus (strain MW2).